The sequence spans 166 residues: Small ribosomal subunit protein uS5 (166 aa).

The S5 DRBM domain occupies 12 to 75 (YIEKLVQVNR…EAARRNMIQV (64 aa)).

It belongs to the universal ribosomal protein uS5 family. In terms of assembly, part of the 30S ribosomal subunit. Contacts proteins S4 and S8.

In terms of biological role, with S4 and S12 plays an important role in translational accuracy. Its function is as follows. Located at the back of the 30S subunit body where it stabilizes the conformation of the head with respect to the body. In Pseudomonas fluorescens (strain SBW25), this protein is Small ribosomal subunit protein uS5.